We begin with the raw amino-acid sequence, 346 residues long: tRNA N6-adenosine threonylcarbamoyltransferase (346 aa).

Fe cation is bound by residues His-111 and His-115. Residues 134 to 138, Asp-167, Gly-180, Asp-184, and Asn-279 contribute to the substrate site; that span reads LVSGG. Asp-307 serves as a coordination point for Fe cation.

This sequence belongs to the KAE1 / TsaD family. Fe(2+) is required as a cofactor.

It is found in the cytoplasm. The catalysed reaction is L-threonylcarbamoyladenylate + adenosine(37) in tRNA = N(6)-L-threonylcarbamoyladenosine(37) in tRNA + AMP + H(+). Its function is as follows. Required for the formation of a threonylcarbamoyl group on adenosine at position 37 (t(6)A37) in tRNAs that read codons beginning with adenine. Is involved in the transfer of the threonylcarbamoyl moiety of threonylcarbamoyl-AMP (TC-AMP) to the N6 group of A37, together with TsaE and TsaB. TsaD likely plays a direct catalytic role in this reaction. In Nostoc sp. (strain PCC 7120 / SAG 25.82 / UTEX 2576), this protein is tRNA N6-adenosine threonylcarbamoyltransferase.